Reading from the N-terminus, the 440-residue chain is uncharacterized protein (440 aa).

Residues 1-19 (MKKLLLAASIIYFASVSLA) form the signal peptide.

This is an uncharacterized protein from Rickettsia typhi (strain ATCC VR-144 / Wilmington).